The following is a 310-amino-acid chain: Formyltetrahydrofolate deformylase (310 aa).

Residues 1 to 30 (MGKGSMTAHATPNEPDYPPPPGGPPPPADI) are disordered. Residues 15 to 28 (PDYPPPPGGPPPPA) show a composition bias toward pro residues. Residues 32–108 (RLLLRCHDRP…VADKFGIDYR (77 aa)) enclose the ACT domain. D255 is an active-site residue.

It belongs to the PurU family.

It catalyses the reaction (6R)-10-formyltetrahydrofolate + H2O = (6S)-5,6,7,8-tetrahydrofolate + formate + H(+). The protein operates within purine metabolism; IMP biosynthesis via de novo pathway; formate from 10-formyl-5,6,7,8-tetrahydrofolate: step 1/1. Functionally, catalyzes the hydrolysis of 10-formyltetrahydrofolate (formyl-FH4) to formate and tetrahydrofolate (FH4). The polypeptide is Formyltetrahydrofolate deformylase (Mycobacterium bovis (strain ATCC BAA-935 / AF2122/97)).